The chain runs to 657 residues: DNA ligase (657 aa).

Position 80-81 (Ser80–Leu81) interacts with NAD(+). Residue Lys104 is the N6-AMP-lysine intermediate of the active site. NAD(+)-binding residues include Arg125, Glu159, and Lys297. Zn(2+) contacts are provided by Cys386, Cys389, Cys406, and Cys411. The BRCT domain maps to Gln571 to Glu657.

It belongs to the NAD-dependent DNA ligase family. LigA subfamily. Mg(2+) is required as a cofactor. Mn(2+) serves as cofactor.

The enzyme catalyses NAD(+) + (deoxyribonucleotide)n-3'-hydroxyl + 5'-phospho-(deoxyribonucleotide)m = (deoxyribonucleotide)n+m + AMP + beta-nicotinamide D-nucleotide.. Its function is as follows. DNA ligase that catalyzes the formation of phosphodiester linkages between 5'-phosphoryl and 3'-hydroxyl groups in double-stranded DNA using NAD as a coenzyme and as the energy source for the reaction. It is essential for DNA replication and repair of damaged DNA. The polypeptide is DNA ligase (Ruminiclostridium cellulolyticum (strain ATCC 35319 / DSM 5812 / JCM 6584 / H10) (Clostridium cellulolyticum)).